A 393-amino-acid chain; its full sequence is Tryptophan synthase beta chain (393 aa).

An N6-(pyridoxal phosphate)lysine modification is found at Lys86.

Belongs to the TrpB family. As to quaternary structure, tetramer of two alpha and two beta chains. The cofactor is pyridoxal 5'-phosphate.

It carries out the reaction (1S,2R)-1-C-(indol-3-yl)glycerol 3-phosphate + L-serine = D-glyceraldehyde 3-phosphate + L-tryptophan + H2O. The protein operates within amino-acid biosynthesis; L-tryptophan biosynthesis; L-tryptophan from chorismate: step 5/5. In terms of biological role, the beta subunit is responsible for the synthesis of L-tryptophan from indole and L-serine. This chain is Tryptophan synthase beta chain, found in Alteromonas mediterranea (strain DSM 17117 / CIP 110805 / LMG 28347 / Deep ecotype).